The following is a 492-amino-acid chain: Excitatory amino acid transporter (492 aa).

Residues 1–7 (MVSWIRK) are Cytoplasmic-facing. 3 helical membrane-spanning segments follow: residues 8–28 (NLLL…GFLL), 47–67 (LLMH…LISG), and 85–105 (TYYM…VLVI). At 106-191 (HPGDPTIKKE…VKASVEYTSG (86 aa)) the chain is on the extracellular side. N-linked (GlcNAc...) asparagine glycans are attached at residues Asn-166 and Asn-176. A run of 5 helical transmembrane segments spans residues 192–212 (MNVL…SQLG), 228–248 (VIMK…LCLI), 270–290 (VTVL…IFFV), 358–378 (AVAA…GQVV), and 389–409 (IGAA…LTAV).

It belongs to the dicarboxylate/amino acid:cation symporter (DAACS) (TC 2.A.23) family.

Its subcellular location is the membrane. In terms of biological role, transports L-glutamate and also L- and D-aspartate. Essential for terminating the postsynaptic action of glutamate by rapidly removing released glutamate from the synaptic cleft. Acts as a symport by cotransporting sodium. The polypeptide is Excitatory amino acid transporter (GLT-1) (Onchocerca volvulus).